We begin with the raw amino-acid sequence, 827 residues long: Periplasmic nitrate reductase (827 aa).

The segment at residues 1–33 is a signal peptide (tat-type signal); sequence MNLSRRDFMKANAAMAAATAAGLTIPVKNVVAA. Residues 37–93 enclose the 4Fe-4S Mo/W bis-MGD-type domain; the sequence is IKWDKGVCRFCGTGCAVLVGTKDGRVVASQGDPDAEVNRGLNCIKGYFLPKIMYGKD. [4Fe-4S] cluster contacts are provided by cysteine 44, cysteine 47, cysteine 51, and cysteine 79. Residues lysine 81, glutamine 148, asparagine 173, cysteine 177, 210 to 217, 241 to 245, 260 to 262, methionine 370, glutamine 374, asparagine 480, 506 to 507, lysine 529, aspartate 556, and 716 to 725 each bind Mo-bis(molybdopterin guanine dinucleotide); these read WGSNMAEM, STYEH, QTD, SD, and TGRVLEHWHT. Phenylalanine 792 serves as a coordination point for substrate. Positions 800 and 817 each coordinate Mo-bis(molybdopterin guanine dinucleotide).

Belongs to the prokaryotic molybdopterin-containing oxidoreductase family. NasA/NapA/NarB subfamily. In terms of assembly, component of the periplasmic nitrate reductase NapAB complex composed of NapA and NapB. [4Fe-4S] cluster is required as a cofactor. Mo-bis(molybdopterin guanine dinucleotide) serves as cofactor. Predicted to be exported by the Tat system. The position of the signal peptide cleavage has not been experimentally proven.

Its subcellular location is the periplasm. It carries out the reaction 2 Fe(II)-[cytochrome] + nitrate + 2 H(+) = 2 Fe(III)-[cytochrome] + nitrite + H2O. Catalytic subunit of the periplasmic nitrate reductase complex NapAB. Receives electrons from NapB and catalyzes the reduction of nitrate to nitrite. The sequence is that of Periplasmic nitrate reductase from Haemophilus influenzae (strain PittEE).